A 148-amino-acid chain; its full sequence is Urease accessory protein UreE (148 aa).

It belongs to the UreE family.

The protein localises to the cytoplasm. Its function is as follows. Involved in urease metallocenter assembly. Binds nickel. Probably functions as a nickel donor during metallocenter assembly. The protein is Urease accessory protein UreE of Nostoc punctiforme (strain ATCC 29133 / PCC 73102).